Here is a 285-residue protein sequence, read N- to C-terminus: Golgi phosphoprotein 3-like (285 aa).

The interval 1-42 is disordered; it reads MTTLTHRARRTEISKNSEKKMESEEDSNWEKSPDNEDSGDSK. The span at 10–42 shows a compositional bias: basic and acidic residues; the sequence is RTEISKNSEKKMESEEDSNWEKSPDNEDSGDSK. Positions 67 and 76 each coordinate a 1,2-diacyl-sn-glycero-3-phospho-(1D-myo-inositol 4-phosphate). Phosphoserine is present on S112. A 1,2-diacyl-sn-glycero-3-phospho-(1D-myo-inositol 4-phosphate) contacts are provided by R157 and R160. Residues 176 to 187 are beta-hairpin required for oligomerization; sequence EKQNFLLFDMTT.

This sequence belongs to the GOLPH3/VPS74 family. Homooligomer. Does not interact MYO18; differs from GOLPH3 by its inability to interact with MYO18. May interact with ARF1.

It is found in the golgi apparatus. The protein localises to the golgi stack membrane. The protein resides in the trans-Golgi network membrane. Phosphatidylinositol-4-phosphate-binding protein that may antagonize the action of GOLPH3 which is required for the process of vesicle budding at the Golgi and anterograde transport to the plasma membrane. This is Golgi phosphoprotein 3-like (GOLPH3L) from Homo sapiens (Human).